We begin with the raw amino-acid sequence, 670 residues long: NADH-ubiquinone oxidoreductase chain 5 (670 aa).

19 helical membrane-spanning segments follow: residues 1–21 (MYIVNLILPLIGSIITGIFGH), 31–51 (IAVGCMMLTAISSLYIGYEIL), 81–101 (LTSIMIIVITCISSMVHLYSM), 111–131 (TRFFSYLSLFTFFMMLLVTAD), 133–153 (FVQLFFGWEGVGIMSYLLINF), 178–198 (LFFGILLVFLVFKSVDFSVIF), 211–231 (LLGYEVNAITLIGSFIVIGVV), 251–271 (TPVSALLHAATMVTAGVFLVL), 283–303 (ILNILTIIGALTTLFATTIGI), 311–331 (VIAYSTCSQLGYMIFACGLLN), 339–359 (LTTHAFFKALLFLSAGSVIHG), 375–395 (LMPLTYQCMLIGTLALTGFPF), 421–441 (AIIGYVAAFGTTFYSFRLLIL), 462–482 (TNMVIPLVILALCSIFIGYVT), 519–539 (LLPLFAFIYGVITPVLFYFNI), 566–586 (FDFLSRVLIVVPFFHLSYDVM), 594–614 (LWEKIGVTGVATTLVTAFTAL), 629–649 (IVQTIILIIVVGIFSFMTGFI), and 650–670 (YMELCIIIGILYICLPSIKID).

This sequence belongs to the complex I subunit 5 family.

It localises to the mitochondrion inner membrane. The catalysed reaction is a ubiquinone + NADH + 5 H(+)(in) = a ubiquinol + NAD(+) + 4 H(+)(out). In terms of biological role, core subunit of the mitochondrial membrane respiratory chain NADH dehydrogenase (Complex I) that is believed to belong to the minimal assembly required for catalysis. Complex I functions in the transfer of electrons from NADH to the respiratory chain. The immediate electron acceptor for the enzyme is believed to be ubiquinone. This chain is NADH-ubiquinone oxidoreductase chain 5 (nad5), found in Dictyostelium discoideum (Social amoeba).